A 199-amino-acid polypeptide reads, in one-letter code: ATP-dependent Clp protease proteolytic subunit (199 aa).

Positions 1–23 (MTTSAARKGLRTRGSACPRATRS) are disordered. Ser-100 acts as the Nucleophile in catalysis. Residue His-125 is part of the active site.

The protein belongs to the peptidase S14 family. As to quaternary structure, fourteen ClpP subunits assemble into 2 heptameric rings which stack back to back to give a disk-like structure with a central cavity, resembling the structure of eukaryotic proteasomes.

The protein resides in the cytoplasm. It carries out the reaction Hydrolysis of proteins to small peptides in the presence of ATP and magnesium. alpha-casein is the usual test substrate. In the absence of ATP, only oligopeptides shorter than five residues are hydrolyzed (such as succinyl-Leu-Tyr-|-NHMec, and Leu-Tyr-Leu-|-Tyr-Trp, in which cleavage of the -Tyr-|-Leu- and -Tyr-|-Trp bonds also occurs).. Its function is as follows. Cleaves peptides in various proteins in a process that requires ATP hydrolysis. Has a chymotrypsin-like activity. Plays a major role in the degradation of misfolded proteins. The polypeptide is ATP-dependent Clp protease proteolytic subunit (Paracoccus denitrificans).